A 1649-amino-acid polypeptide reads, in one-letter code: Formin-like protein 20 (1649 aa).

Residues 1-194 form the Phosphatase tensin-type domain; the sequence is MALFRRFFYK…QYISRRNLGS (194 aa). Catalysis depends on C127, which acts as the Phosphocysteine intermediate. The region spanning 200-339 is the C2 tensin-type domain; the sequence is DTPLLLDCLI…FKAEVLFSGA (140 aa). Disordered stretches follow at residues 416-774 and 787-1245; these read DCAS…PWKS and STSQ…QKKS. Over residues 421 to 483 the composition is skewed to basic and acidic residues; sequence DSNHKHDMHA…RRTVEAKEND (63 aa). 2 stretches are compositionally biased toward polar residues: residues 500–513 and 585–597; these read LESMSQKTNTSLNK and RINSAPASITTSL. Over residues 598 to 616 the composition is skewed to basic and acidic residues; it reads KDGKRATSPDGVIPKDAKT. Residues 648-662 are compositionally biased toward pro residues; sequence SLPPASPHQAPPPLP. Residues 665–678 show a composition bias toward polar residues; the sequence is TSEAKTVLHSSQAV. 5 stretches are compositionally biased toward pro residues: residues 680–691, 701–711, 722–732, 743–752, and 795–804; these read SPPPPPPPPPLP, LPPPPPPPPPF, LPPPPPPPLP, and SPTPPPPPPA. Residues 809 to 820 show a composition bias toward polar residues; the sequence is GQKSSDLQTSQL. Pro residues-rich tracts occupy residues 821–832, 843–854, and 865–874; these read PSPPPPPPPPPF, LPPPPPPPPPPF, and LPPPPPPPPW. Positions 878–890 are enriched in polar residues; the sequence is YASTFETHEACST. Composition is skewed to pro residues over residues 893-904, 944-960, and 968-1213; these read SPPPPPPPPPFS, PSPPVKTAPPPPPPPPF, and SPPP…PPPM. The FH2 domain occupies 1237–1635; the sequence is FGSAAQKKSS…KALKEAEMEK (399 aa).

The protein belongs to the formin-like family. Class-II subfamily.

This chain is Formin-like protein 20 (FH20), found in Arabidopsis thaliana (Mouse-ear cress).